A 66-amino-acid polypeptide reads, in one-letter code: Toxin NaTx-4 (66 aa).

In terms of domain architecture, LCN-type CS-alpha/beta spans 1–64 (KEGYLVNKET…TFPIPGKTCS (64 aa)). 4 disulfide bridges follow: cysteine 12–cysteine 63, cysteine 16–cysteine 39, cysteine 25–cysteine 44, and cysteine 29–cysteine 46.

This sequence belongs to the long (4 C-C) scorpion toxin superfamily. Sodium channel inhibitor family. Expressed by the venom gland.

It localises to the secreted. Functionally, probable sodium channel inhibitor. This chain is Toxin NaTx-4, found in Centruroides sculpturatus (Arizona bark scorpion).